A 379-amino-acid polypeptide reads, in one-letter code: Zinc finger protein 883 (379 aa).

13 consecutive C2H2-type zinc fingers follow at residues 13-35 (YLCT…QKTH), 41-63 (YECK…QRIH), 69-91 (YECN…QRVH), 97-119 (YECN…ERIH), 125-147 (YPCN…HRIH), 153-175 (YECT…QGIH), 181-203 (YQCK…QRTH), 209-231 (YECN…QRIH), 237-259 (YECN…QRTH), 265-287 (YVCK…LKIH), 293-315 (YQCN…QRTH), 321-343 (YQCN…KRIH), and 349-371 (YQCT…QKTH).

The protein belongs to the krueppel C2H2-type zinc-finger protein family.

The protein resides in the nucleus. Functionally, may be involved in transcriptional regulation. In Homo sapiens (Human), this protein is Zinc finger protein 883 (ZNF883).